Consider the following 25-residue polypeptide: Chitinolytic alpha-amylase inhibitor PvCAI (25 aa).

Homodimer.

The enzyme catalyses Random endo-hydrolysis of N-acetyl-beta-D-glucosaminide (1-&gt;4)-beta-linkages in chitin and chitodextrins.. Functionally, alpha-amylase inhibitor, active against Z.subfasciatus alpha-amylase (ZSA) but not porcine pancreatic alpha-amylase (PPA). Has chitinase activity. In Phaseolus vulgaris (Kidney bean), this protein is Chitinolytic alpha-amylase inhibitor PvCAI.